Reading from the N-terminus, the 434-residue chain is Nicotinate phosphoribosyltransferase (434 aa).

A Phosphohistidine; by autocatalysis modification is found at His242.

Belongs to the NAPRTase family. Transiently phosphorylated on a His residue during the reaction cycle. Phosphorylation strongly increases the affinity for substrates and increases the rate of nicotinate D-ribonucleotide production. Dephosphorylation regenerates the low-affinity form of the enzyme, leading to product release.

It catalyses the reaction nicotinate + 5-phospho-alpha-D-ribose 1-diphosphate + ATP + H2O = nicotinate beta-D-ribonucleotide + ADP + phosphate + diphosphate. Its pathway is cofactor biosynthesis; NAD(+) biosynthesis; nicotinate D-ribonucleotide from nicotinate: step 1/1. Its function is as follows. Catalyzes the synthesis of beta-nicotinate D-ribonucleotide from nicotinate and 5-phospho-D-ribose 1-phosphate at the expense of ATP. The chain is Nicotinate phosphoribosyltransferase from Bartonella quintana (strain Toulouse) (Rochalimaea quintana).